Reading from the N-terminus, the 1542-residue chain is MTEVGAADLSRLLQSKRNECSSIVTSRKRKLRELFVVATQSEGLPHPVLTNPDAPTTTPAEWQFLQANDINQSKTLNEASIPTRPTFSLEVLKKSLAKSIFIANESVPKQTSENSNKSHVTDAQDEQQSNRASLSTKSDAAATSTRPNTPETSTESATTANPVPPPAKNTQAVLPPADAIEKPIPTTSPDVPASTGANANSITNEEDRSDPNEVASVPRQPQVTFETGTKGEHVETGTSSVKSGHGVGDSAVTTGVPSTVKPSADVTRSADALSSPGSTAQSATTPAVHDDASTDTSPEHEGPQYVEPAEQKKIEDGTHERDTDKYHQSHQDGDIRAPSTKDLEDRVLEAPPDSAEAQLLQESIRSNVAAENEAALNSESTSQEADTAISAPVSEDVNMSDVDDRVVKAAPTVGEKVEEKRAQQILDTDAKSALATGAPAEISGSKEIPDSQEEAPEQMDVDAPEPKASTESQIGAPISLEKLDAADTGPSSPTPAHIAEVATPPEPVRQNSPPKAERAVTRVSSGAMRPKSVSEIVGVTPRQTPTLEHISTNKSTNHQLTPLTSTPKSPTLRHRHISAHQRQASRSQPSTVVFGKQSKKGEEKSMVTSQHDTILPTEDYYTPLFVQGFAGSSSWMQPIEKILYTANKTVTTPDANLAIQDHQACKVLRRVYHLQQHDKWSLRQPKRCPEPTRPPSHWDVVLQEMKWMRTDFREERKWKRAVAKNLAYACAEWHEATPEERKTLQVQAVVPPKMKPASDVAMVDAEGTNHLTPDLVSSEDVESIDNLDDLIEDFPETIAPSAIFNLQDEDVVFGLRRTAAADQLLEELPMFGAPLQVPKFDLTGPEWDPDAHWRRPALPLSKYVEGHMKLVSDGPPRKRSRYNYQNEDSDDEGEAGFVSSDSTPSLPLPSATDEVALFNPEMKHIRDRLYVGHQFRPPSEYPMPSQSFFECRSPSQWTIAEDDELRSLVREHSYNWSLISSILAPRSIFNSGAERRTPWECFERWINLEGLPADMSKTQYFKAYMGRINTAQNMINIQNQAMAQQQVNQANGAVTPGRRRHQSIPFRVERRRNQKHLTMLDAMRKLAKKRETTAQKQQHTASQNAANKKTNESASQRPTKTPGEYSRLRYERDQALAEKMAQFASRQEAQRRAVLQARAQGQAAQMAAGTPAAVQAGQNSAQAAAAAAAAAAAANGMNGVGRVNVPNQLAAAAAAATGQARPRMPMQSPAPASMGGVPAHMASGLVPPNQMNSVQQAQMQAMQAMQGQHNRMPMPNPPPDVSLMMRAQRISEQQRAAQMHAQGGPGTPGQGAVGAQQSPPAQMRNAMNGVNGINSNPMNQQSFLNNAQAMMAQFNQGNLSSPQANGLHMPSGPAGSIAPRPQTQLPAAIQAQLNQLEAQYRAKNSSLTSEQARQMATEHLTRLMMAQRSAMNAAAGTAGGQGGLAGSIAATTSPHQYAALLRQQQQQQASAAAGSPGQQHQQPHQAQHQPQQQQSQQQQAQAKQQQPQQQVQAHAHAQAQHQAQQQQQQQRQASGSATPSAG.

Composition is skewed to polar residues over residues 108 to 118 and 126 to 146; these read PKQTSENSNKS and EQQS…TSTR. 2 disordered regions span residues 108-531 and 550-611; these read PKQT…MRPK and ISTN…TSQH. Positions 147 to 161 are enriched in low complexity; it reads PNTPETSTESATTAN. Composition is skewed to polar residues over residues 185 to 203, 251 to 261, and 275 to 285; these read PTTS…NSIT, AVTTGVPSTVK, and SPGSTAQSATT. Basic and acidic residues-rich tracts occupy residues 288–302 and 309–348; these read VHDD…EHEG and AEQK…DRVL. Positions 366-380 are enriched in low complexity; the sequence is SNVAAENEAALNSES. The span at 450-463 shows a compositional bias: acidic residues; the sequence is DSQEEAPEQMDVDA. A compositionally biased stretch (polar residues) spans 550 to 559; that stretch reads ISTNKSTNHQ. The segment covering 560–570 has biased composition (low complexity); that stretch reads LTPLTSTPKSP. Positions 580–591 are enriched in polar residues; the sequence is HQRQASRSQPST. The HSA domain occupies 685–759; sequence PKRCPEPTRP…VPPKMKPASD (75 aa). Residues 871–906 are disordered; that stretch reads VSDGPPRKRSRYNYQNEDSDDEGEAGFVSSDSTPSL. A Myb-like domain is found at 955 to 1009; it reads SQWTIAEDDELRSLVREHSYNWSLISSILAPRSIFNSGAERRTPWECFERWINLE. Disordered regions lie at residues 1088–1127, 1220–1244, 1292–1324, and 1462–1542; these read KKRE…EYSR, ARPR…MASG, EQQR…AQMR, and RQQQ…PSAG. Residues 1094–1119 are compositionally biased toward polar residues; the sequence is AQKQQHTASQNAANKKTNESASQRPT. Gly residues predominate over residues 1303 to 1312; the sequence is GGPGTPGQGA. The segment covering 1463–1542 has biased composition (low complexity); it reads QQQQQQASAA…ASGSATPSAG (80 aa).

The protein belongs to the EAF1 family. Component of the NuA4 histone acetyltransferase complex.

The protein localises to the nucleus. Functionally, component of the NuA4 histone acetyltransferase complex which is involved in transcriptional activation of selected genes principally by acetylation of nucleosomal histone H4 and H2A. The NuA4 complex is also involved in DNA repair. This chain is Chromatin modification-related protein EAF1 (EAF1), found in Gibberella zeae (strain ATCC MYA-4620 / CBS 123657 / FGSC 9075 / NRRL 31084 / PH-1) (Wheat head blight fungus).